Consider the following 147-residue polypeptide: Peptide deformylase 1 (147 aa).

Positions 90 and 132 each coordinate Fe cation. Glu133 is a catalytic residue. His136 is a binding site for Fe cation.

This sequence belongs to the polypeptide deformylase family. It depends on Fe(2+) as a cofactor.

The catalysed reaction is N-terminal N-formyl-L-methionyl-[peptide] + H2O = N-terminal L-methionyl-[peptide] + formate. Removes the formyl group from the N-terminal Met of newly synthesized proteins. Requires at least a dipeptide for an efficient rate of reaction. N-terminal L-methionine is a prerequisite for activity but the enzyme has broad specificity at other positions. The chain is Peptide deformylase 1 from Clostridium perfringens (strain 13 / Type A).